The following is a 313-amino-acid chain: D-alanine--D-alanine ligase (313 aa).

In terms of domain architecture, ATP-grasp spans 108-308 (KLVWQQTGVP…YSELVVKVLS (201 aa)). 138 to 193 (VAKLGLPLFVKPASEGSSVAVLKVKTADALPAALAEAATHDKIVIVEKSIEGGGEY) contacts ATP. The Mg(2+) site is built by Asp-262, Glu-275, and Asn-277.

The protein belongs to the D-alanine--D-alanine ligase family. Requires Mg(2+) as cofactor. Mn(2+) serves as cofactor.

It is found in the cytoplasm. The enzyme catalyses 2 D-alanine + ATP = D-alanyl-D-alanine + ADP + phosphate + H(+). It functions in the pathway cell wall biogenesis; peptidoglycan biosynthesis. Functionally, cell wall formation. The protein is D-alanine--D-alanine ligase of Burkholderia cenocepacia (strain HI2424).